Reading from the N-terminus, the 197-residue chain is MIPIVIEESGRGERAFDIYSRLLRERIIFLGEAVTSDSANRIVAQMLFLEAEDPEKDIYLYINSPGGSVYDGLGIFDTMQHIKPDVQTVCVGLAASMGAFLLCAGTKGKRSSLQHSRIMIHQPLGGASGQASDIRIQADEILYLKDRLNTELSDRTGQPLDRIQEDTDRDFFMSPGEAVSYGLIDSVIDKRPVQAVA.

S96 (nucleophile) is an active-site residue. H121 is a catalytic residue.

The protein belongs to the peptidase S14 family. Fourteen ClpP subunits assemble into 2 heptameric rings which stack back to back to give a disk-like structure with a central cavity, resembling the structure of eukaryotic proteasomes.

The protein localises to the cytoplasm. It catalyses the reaction Hydrolysis of proteins to small peptides in the presence of ATP and magnesium. alpha-casein is the usual test substrate. In the absence of ATP, only oligopeptides shorter than five residues are hydrolyzed (such as succinyl-Leu-Tyr-|-NHMec, and Leu-Tyr-Leu-|-Tyr-Trp, in which cleavage of the -Tyr-|-Leu- and -Tyr-|-Trp bonds also occurs).. Its function is as follows. Cleaves peptides in various proteins in a process that requires ATP hydrolysis. Has a chymotrypsin-like activity. Plays a major role in the degradation of misfolded proteins. This is ATP-dependent Clp protease proteolytic subunit 1 from Synechococcus sp. (strain CC9902).